The primary structure comprises 466 residues: Probable fibrosin-1 (466 aa).

Lysine 8 is covalently cross-linked (Glycyl lysine isopeptide (Lys-Gly) (interchain with G-Cter in SUMO2)). An asymmetric dimethylarginine mark is found at arginine 229 and arginine 239. Disordered stretches follow at residues alanine 236–alanine 315 and leucine 410–arginine 466. Positions glycine 248 to proline 272 are enriched in basic and acidic residues. Position 281 is a phosphoserine (serine 281). The segment covering arginine 288–alanine 311 has biased composition (basic and acidic residues). Positions alanine 442–proline 459 are enriched in pro residues.

The polypeptide is Probable fibrosin-1 (Fbrs) (Mus musculus (Mouse)).